The chain runs to 271 residues: DNA repair protein RecO (271 aa).

This sequence belongs to the RecO family.

Its function is as follows. Involved in DNA repair and RecF pathway recombination. This chain is DNA repair protein RecO, found in Synechococcus sp. (strain CC9311).